The following is a 959-amino-acid chain: Transcription factor 1 (959 aa).

C2H2-type zinc fingers lie at residues 2-24 and 30-52; these read VFCT…ILTH and FKCF…YTVH. Positions 79–105 form a DNA-binding region, zn(2)-C6 fungal-type; sequence CSNCAKTKTKCDKKFPCSRCASRNLRC. A disordered region spans residues 154–226; the sequence is PTGHVEESSK…SFPGFDDYNQ (73 aa). Low complexity predominate over residues 163 to 178; sequence KSSSPSGSPTSISHNS.

Its subcellular location is the nucleus. In terms of biological role, elsinochromes biosynthesis cluster-specific transcription factor that positively regulates the expression of cluster genes including RDT1, PKS1, PRF1 and HP1, and subsequent elsinochromes production. The sequence is that of Transcription factor 1 from Elsinoe fawcettii (Citrus scab fungus).